Reading from the N-terminus, the 275-residue chain is MGLSASAPAASTVQTSTPAASDHQTAAPTSGCPMHEGKVKGCPVSAEPSDSTCGSKTNSVPAHQERAYEYVQCPITGAKAANKENLDPSNLMPPPNQTPAPDQPFPLSTVREESSIPRADSDKKWVYPSEQMFWNAMLRKGWKWKDEDISQKDMYNIIRIHNQNNEQAWKEILKWEALHAAECPCGPSLIRFGGKAKEYSPRARIRSWMGYELPFDRHDWIINRCGTEVRYVIDYYDGGEVNQDYQFTILDVRPALDSLSAVWDRMKVAWWRWTS.

2 disordered regions span residues 1–59 (MGLS…KTNS) and 83–102 (KENLDPSNLMPPPNQTPAPD). Gly-2 is lipidated: N-myristoyl glycine. The span at 9-28 (AASTVQTSTPAASDHQTAAP) shows a compositional bias: polar residues. HRM repeat units lie at residues 31–36 (GCPMHE) and 41–46 (GCPVSA). Residues 48-59 (PSDSTCGSKTNS) are compositionally biased toward polar residues. The span at 91-102 (LMPPPNQTPAPD) shows a compositional bias: pro residues.

It belongs to the cytochrome c-type heme lyase family.

The protein localises to the mitochondrion inner membrane. Its subcellular location is the membrane. The enzyme catalyses holo-[cytochrome c] = apo-[cytochrome c] + heme b. Its function is as follows. Lyase that catalyzes the covalent linking of the heme group to the cytochrome C apoprotein to produce the mature functional cytochrome. The protein is Holocytochrome c-type synthase of Bos taurus (Bovine).